The primary structure comprises 118 residues: Succinate dehydrogenase assembly factor 4, mitochondrial (118 aa).

The transit peptide at 1-30 (MQSVTRQTARVLPQMGKQVSYLSTSGAWRA) directs the protein to the mitochondrion. Positions 65–118 (GKLDEFSRHPYQEKEPLKPWPNQTNPYTGEIGGPAGPEPTRYGDWERKGRVSDF) are disordered. 2 stretches are compositionally biased toward basic and acidic residues: residues 66–81 (KLDEFSRHPYQEKEPL) and 105–118 (RYGDWERKGRVSDF).

The protein belongs to the SDHAF4 family. In terms of assembly, interacts with SdhA in its FAD-bound form.

It is found in the mitochondrion matrix. Plays an essential role in the assembly of succinate dehydrogenase (SDH), an enzyme complex (also referred to as respiratory complex II) that is a component of both the tricarboxylic acid (TCA) cycle and the mitochondrial electron transport chain, and which couples the oxidation of succinate to fumarate with the reduction of ubiquinone (coenzyme Q) to ubiquinol. Binds to the flavoprotein subunit SdhA in its FAD-bound form, blocking the generation of excess reactive oxygen species (ROS) and facilitating its assembly with the iron-sulfur protein subunit SdhB into the SDH catalytic dimer. The chain is Succinate dehydrogenase assembly factor 4, mitochondrial from Drosophila melanogaster (Fruit fly).